The primary structure comprises 118 residues: Large ribosomal subunit protein uL18 (118 aa).

The protein belongs to the universal ribosomal protein uL18 family. As to quaternary structure, part of the 50S ribosomal subunit; part of the 5S rRNA/L5/L18/L25 subcomplex. Contacts the 5S and 23S rRNAs.

Its function is as follows. This is one of the proteins that bind and probably mediate the attachment of the 5S RNA into the large ribosomal subunit, where it forms part of the central protuberance. This chain is Large ribosomal subunit protein uL18, found in Rhizorhabdus wittichii (strain DSM 6014 / CCUG 31198 / JCM 15750 / NBRC 105917 / EY 4224 / RW1) (Sphingomonas wittichii).